A 95-amino-acid chain; its full sequence is UPF0045 protein CPE1503 (95 aa).

This sequence belongs to the UPF0045 family.

This chain is UPF0045 protein CPE1503, found in Clostridium perfringens (strain 13 / Type A).